We begin with the raw amino-acid sequence, 729 residues long: Catalase-peroxidase (729 aa).

A disordered region spans residues 1–20 (MHNGSNGSVEQRDSMPETSR). Basic and acidic residues predominate over residues 10–20 (EQRDSMPETSR). The tryptophyl-tyrosyl-methioninium (Trp-Tyr) (with M-240) cross-link spans 91–214 (WHAAGTYRTT…LGATVMGLIY (124 aa)). The active-site Proton acceptor is the His92. A cross-link (tryptophyl-tyrosyl-methioninium (Tyr-Met) (with W-91)) is located at residues 214–240 (YVNPEGPESTPDPEWSAQRIRKSFGRM). His255 lines the heme b pocket.

The protein belongs to the peroxidase family. Peroxidase/catalase subfamily. In terms of assembly, homodimer or homotetramer. Heme b is required as a cofactor. Formation of the three residue Trp-Tyr-Met cross-link is important for the catalase, but not the peroxidase activity of the enzyme.

It catalyses the reaction H2O2 + AH2 = A + 2 H2O. It carries out the reaction 2 H2O2 = O2 + 2 H2O. In terms of biological role, bifunctional enzyme with both catalase and broad-spectrum peroxidase activity. The sequence is that of Catalase-peroxidase from Salinibacter ruber (strain DSM 13855 / M31).